The sequence spans 197 residues: Thymidine kinase (197 aa).

ATP-binding positions include 9–16 and 87–90; these read SAMDAGKT and DEIH. Glutamate 88 acts as the Proton acceptor in catalysis. Zn(2+) contacts are provided by cysteine 145, cysteine 147, cysteine 187, and histidine 190.

Belongs to the thymidine kinase family. Homotetramer.

The protein resides in the cytoplasm. It carries out the reaction thymidine + ATP = dTMP + ADP + H(+). This Francisella tularensis subsp. holarctica (strain LVS) protein is Thymidine kinase.